The following is a 242-amino-acid chain: Anti-Pycsar protein Apyc1 (242 aa).

The interval 17–216 is beta-lactamase-like; sequence FNNNALIEQD…EMQSIIKLMH (200 aa). The Zn(2+) site is built by histidine 59, histidine 61, aspartate 63, histidine 64, histidine 142, aspartate 162, and histidine 216.

Belongs to the anti-Pycsar protein Apyc1 family. In terms of assembly, homodimer. Zn(2+) serves as cofactor.

It catalyses the reaction 3',5'-cyclic CMP + H2O = CMP + H(+). It carries out the reaction 3',5'-cyclic UMP + H2O = UMP + H(+). Counteracts the endogenous Pycsar antiviral defense system. Phosphodiesterase that enables metal-dependent hydrolysis of host cyclic nucleotide Pycsar defense signals such as cCMP and cUMP. This is Anti-Pycsar protein Apyc1 from Saccharibacillus brassicae.